The following is a 363-amino-acid chain: 3-isopropylmalate dehydrogenase (363 aa).

Residue Gly-78 to Glu-91 coordinates NAD(+). Positions 99, 109, 138, and 227 each coordinate substrate. The Mg(2+) site is built by Asp-227, Asp-251, and Asp-255. NAD(+) is bound at residue Gly-285–Asn-297.

It belongs to the isocitrate and isopropylmalate dehydrogenases family. LeuB type 1 subfamily. Homodimer. Mg(2+) serves as cofactor. It depends on Mn(2+) as a cofactor.

Its subcellular location is the cytoplasm. The enzyme catalyses (2R,3S)-3-isopropylmalate + NAD(+) = 4-methyl-2-oxopentanoate + CO2 + NADH. It functions in the pathway amino-acid biosynthesis; L-leucine biosynthesis; L-leucine from 3-methyl-2-oxobutanoate: step 3/4. Requires K(+) ions for optimum activity. In terms of biological role, catalyzes the oxidation of 3-carboxy-2-hydroxy-4-methylpentanoate (3-isopropylmalate) to 3-carboxy-4-methyl-2-oxopentanoate. The product decarboxylates to 4-methyl-2 oxopentanoate. This Escherichia coli (strain K12) protein is 3-isopropylmalate dehydrogenase.